The primary structure comprises 443 residues: ASTRA-associated protein 1 (443 aa).

WD repeat units lie at residues 23–67 (YHKR…PITH), 71–110 (EGNS…QLSI), 258–295 (HYPN…QLET), and 318–359 (KVHL…VEQT). The disordered stretch occupies residues 372 to 391 (SSMGDLTNGSGSNTESSSKS). Over residues 378 to 391 (TNGSGSNTESSSKS) the composition is skewed to low complexity.

The protein belongs to the WD repeat ASA1 family. Component of the ASTRA chromatin remodeling machinery complex composed of at least RVB1, RVB2, TRA1, TEL2, TTI1 and TTI2.

The protein resides in the nucleus. In terms of biological role, component of the ASTRA complex involved in chromatin remodeling. The protein is ASTRA-associated protein 1 (ASA1) of Saccharomyces cerevisiae (strain RM11-1a) (Baker's yeast).